Reading from the N-terminus, the 670-residue chain is DNA topoisomerase 6 subunit B (670 aa).

The interval 1–30 (MAGDDLVETKKGSSKNSKDSNESKLKQKSP) is disordered. The span at 7 to 25 (VETKKGSSKNSKDSNESKL) shows a compositional bias: basic and acidic residues. Residues Asn-60, Asp-160, 181–182 (TK), 190–197 (GKFGLGAK), and Lys-516 contribute to the ATP site.

Belongs to the TOP6B family. As to quaternary structure, homodimer. Heterotetramer of two TOP6A and two TOP6B subunits. Interacts with SPO11-2, but not with SPO11-1, RHL1 or BIN4. Highly expressed in leaves, stems, flowers and seedlings.

Its subcellular location is the nucleus. The catalysed reaction is ATP-dependent breakage, passage and rejoining of double-stranded DNA.. In terms of biological role, component of the DNA topoisomerase VI involved in chromatin organization and progression of endoreduplication cycles. Relaxes both positive and negative superturns and exhibits a strong decatenase activity. The B subunit binds ATP. Involved in cell-elongation processes. This chain is DNA topoisomerase 6 subunit B, found in Arabidopsis thaliana (Mouse-ear cress).